Consider the following 224-residue polypeptide: Holliday junction branch migration complex subunit RuvA (224 aa).

The segment at 1–64 is domain I; it reads MIGRLSGVLV…EDLLQLYGFP (64 aa). The segment at 65–143 is domain II; that stretch reads TLLEKEWHRL…EVMAMGGTLE (79 aa). The segment at 144-171 is flexible linker; it reads AALDGVIEDGMAASEGIEPPSAARPAVP. The domain III stretch occupies residues 172-224; that stretch reads SAASDQAGALSALVNLGYGQGEAASAVATAAGEGAVGETDIIRAALRLLAPKG.

It belongs to the RuvA family. Homotetramer. Forms an RuvA(8)-RuvB(12)-Holliday junction (HJ) complex. HJ DNA is sandwiched between 2 RuvA tetramers; dsDNA enters through RuvA and exits via RuvB. An RuvB hexamer assembles on each DNA strand where it exits the tetramer. Each RuvB hexamer is contacted by two RuvA subunits (via domain III) on 2 adjacent RuvB subunits; this complex drives branch migration. In the full resolvosome a probable DNA-RuvA(4)-RuvB(12)-RuvC(2) complex forms which resolves the HJ.

Its subcellular location is the cytoplasm. Functionally, the RuvA-RuvB-RuvC complex processes Holliday junction (HJ) DNA during genetic recombination and DNA repair, while the RuvA-RuvB complex plays an important role in the rescue of blocked DNA replication forks via replication fork reversal (RFR). RuvA specifically binds to HJ cruciform DNA, conferring on it an open structure. The RuvB hexamer acts as an ATP-dependent pump, pulling dsDNA into and through the RuvAB complex. HJ branch migration allows RuvC to scan DNA until it finds its consensus sequence, where it cleaves and resolves the cruciform DNA. The sequence is that of Holliday junction branch migration complex subunit RuvA from Dinoroseobacter shibae (strain DSM 16493 / NCIMB 14021 / DFL 12).